Consider the following 467-residue polypeptide: Repressible acid phosphatase (467 aa).

The signal sequence occupies residues 1–17; that stretch reads MFKSVVYSILAASLANA. The Nucleophile role is filled by His-75. 6 N-linked (GlcNAc...) asparagine glycosylation sites follow: Asn-97, Asn-103, Asn-162, Asn-192, Asn-250, and Asn-315. The active-site Proton donor is the Asp-338. 6 N-linked (GlcNAc...) asparagine glycosylation sites follow: Asn-356, Asn-390, Asn-439, Asn-445, Asn-456, and Asn-461.

The protein belongs to the histidine acid phosphatase family. Post-translationally, glycosylated during secretion across the membrane.

Its subcellular location is the secreted. It catalyses the reaction a phosphate monoester + H2O = an alcohol + phosphate. In terms of biological role, partially mediates extracellular nucleotide derived phosphate hydrolysis along with NPP1 and NPP2. This chain is Repressible acid phosphatase (PHO5), found in Saccharomyces cerevisiae (strain ATCC 204508 / S288c) (Baker's yeast).